Reading from the N-terminus, the 145-residue chain is Mitochondrial import receptor subunit TOM20 homolog (145 aa).

At 1-6 (MVGRNS) the chain is on the mitochondrial intermembrane side. The helical transmembrane segment at 7–24 (AIAAGVCGALFIGYCIYF) threads the bilayer. Residues 25-145 (DRKRRSDPNF…AQSLAEDDVE (121 aa)) are Cytoplasmic-facing. Glycyl lysine isopeptide (Lys-Gly) (interchain with G-Cter in ubiquitin) cross-links involve residues lysine 35, lysine 56, lysine 61, and lysine 68. A phosphoserine mark is found at serine 135 and serine 138.

It belongs to the Tom20 family. In terms of assembly, forms part of the preprotein translocase complex of the outer mitochondrial membrane (TOM complex) which consists of at least 7 different proteins (TOMM5, TOMM6, TOMM7, TOMM20, TOMM22, TOMM40 and TOMM70). Interacts with TOM22. Interacts with APEX1. Interacts with TBC1D21. Upon mitochondrial depolarization, interacts with PINK1; the interaction is required for PINK1-TOM-TIM23 supercomplex formation which is critical for PINK1 stabilization at the outer mitochondrial membrane, kinase activation and downstream mitophagy. In terms of processing, ubiquitinated by PRKN during mitophagy, leading to its degradation and enhancement of mitophagy. Deubiquitinated by USP30. In terms of tissue distribution, expressed in brain, kidney, stomach, colon, jejunum, ileum, testis, ovary and oviduct (at protein level). In the brain, expressed in neural cells of the cerebrum and cerebellum (at protein level). In the kidney, expressed in the proximal to distal tubule in the cortex and the outer and inner zones of the medulla (at protein level). In the stomach, expressed in the basal layer of stratified squamous epithelia in the forestomach and in the gastric pit and fundic gland of the glandular stomach (at protein level). Expressed in epithelial cells of the jejunum, ileum, and colon (at protein level). In the testis, expressed by spermatocytes and spermatogonia (at protein level). In the ovaries, expressed by follicular epithelial cells and corpus luteum cells (at protein level). In the oviduct, expressed in the epithelia of the isthmus and the ciliated cells of the ampulla (at protein level). Expressed in the sperm midpiece (at protein level).

It is found in the mitochondrion outer membrane. In terms of biological role, central component of the receptor complex responsible for the recognition and translocation of cytosolically synthesized mitochondrial preproteins. Together with TOM22 functions as the transit peptide receptor at the surface of the mitochondrion outer membrane and facilitates the movement of preproteins into the TOM40 translocation pore. Required for the translocation across the mitochondrial outer membrane of cytochrome P450 monooxygenases. This Mus musculus (Mouse) protein is Mitochondrial import receptor subunit TOM20 homolog (Tomm20).